We begin with the raw amino-acid sequence, 745 residues long: Mitogen-activated protein kinase kinase kinase zak-1 (745 aa).

Positions 31–305 (IQVGDHIGVG…KVMDECEKFM (275 aa)) constitute a Protein kinase domain. ATP is bound by residues 37–45 (IGVGTFGAV) and lysine 63. Aspartate 159 acts as the Proton acceptor in catalysis. The stretch at 307–352 (LEDWKTEIEKQEKNVEKMRKDLEKRREQLEIREKALKQRMKVEQAV) forms a coiled coil. The region spanning 366–438 (WSEHHTSHWV…MKMIRKLADT (73 aa)) is the SAM domain. The segment at 693–745 (LTRRRRTTTTNSEDTEKSDTNNKTPESQARRVHVHGGKDKWNWKKGKSRPKFT) is disordered. Residues 735-745 (WKKGKSRPKFT) show a composition bias toward basic residues.

Belongs to the protein kinase superfamily. STE Ser/Thr protein kinase family. MAP kinase kinase kinase subfamily. Mg(2+) serves as cofactor. Widely expressed; expressed in most tissues, including intestines, muscle and the nervous system.

The protein resides in the cytoplasm. Its subcellular location is the nucleus. It carries out the reaction L-seryl-[protein] + ATP = O-phospho-L-seryl-[protein] + ADP + H(+). The catalysed reaction is L-threonyl-[protein] + ATP = O-phospho-L-threonyl-[protein] + ADP + H(+). Stress-activated component of a protein kinase signal transduction cascade that promotes programmed cell death in response to ribotoxic stress. Acts as the proximal sensor of ribotoxic stress: directly binds to the ribosome, thereby acting as a sentinel for colliding ribosomes. Upon ribosome collisions, activates the stress-activated protein kinase signal transduction cascade, leading to programmed cell death. Acts by catalyzing phosphorylation of MAP kinase kinases, leading to activation of the JNK and MAP kinase p38 pathways. This is Mitogen-activated protein kinase kinase kinase zak-1 from Caenorhabditis elegans.